Reading from the N-terminus, the 276-residue chain is MASTASLRVAPQADTYAAYQTPLAVRQACRSGALTGPTAGMAPGYVQGNLAVLPKELAEEFLRFCHFNPRPCPVIGMSEPGSFKVPVLGEDLDIRTDFPGYRVWQDGEVIADTADVTDYWRDDLVAFVIGCSLSFEEALMAEGLPLRHVDRNVRVPMFRTTVQCVPAGRFSGRMVMSMRPLVPAHAIRAIQITTRFPQVHGAPLHVGLPELIGVKDLMKPDYGDAVEVLDNELPVFWACGVTPQSVIAEAKPSFAITHAPGCMLVTDRRNTEFAIL.

This sequence belongs to the D-glutamate cyclase family.

The chain is Putative hydro-lyase Xaut_1503 from Xanthobacter autotrophicus (strain ATCC BAA-1158 / Py2).